Consider the following 121-residue polypeptide: Flagellar protein FliT (121 aa).

A required for homodimerization region spans residues 1–50 (MNNAPHLYFAWQQLVEKSQLMLRLATEEQWDELIASEMAYVNAVQEIAHL). Residues 60 to 98 (MQEQLRPMLHLILDNESKVKQLLQIRMDELAKLVGQSSV) form a fliD binding region.

The protein belongs to the FliT family. Homodimer. Interacts with FliD and FlhC.

Its subcellular location is the cytoplasm. It localises to the cytosol. In terms of biological role, dual-function protein that regulates the transcription of class 2 flagellar operons and that also acts as an export chaperone for the filament-capping protein FliD. As a transcriptional regulator, acts as an anti-FlhDC factor; it directly binds FlhC, thus inhibiting the binding of the FlhC/FlhD complex to class 2 promoters, resulting in decreased expression of class 2 flagellar operons. As a chaperone, effects FliD transition to the membrane by preventing its premature polymerization, and by directing it to the export apparatus. This chain is Flagellar protein FliT, found in Shigella flexneri serotype 5b (strain 8401).